The chain runs to 473 residues: Photosystem II CP43 reaction center protein (473 aa).

A propeptide spanning residues 1–14 (MKILYSLRRFYHVE) is cleaved from the precursor. T15 carries the post-translational modification N-acetylthreonine. T15 carries the phosphothreonine modification. 5 helical membrane-spanning segments follow: residues 69 to 93 (LFEV…PHLA), 134 to 155 (LLGP…KDRN), 178 to 200 (KALY…RKIT), 255 to 275 (KPFA…LSYS), and 291 to 312 (WFNN…ASQA). E367 serves as a coordination point for [CaMn4O5] cluster. A helical membrane pass occupies residues 447-471 (RARAAAAGFEKGIDRDLEPVLYMTP).

This sequence belongs to the PsbB/PsbC family. PsbC subfamily. PSII is composed of 1 copy each of membrane proteins PsbA, PsbB, PsbC, PsbD, PsbE, PsbF, PsbH, PsbI, PsbJ, PsbK, PsbL, PsbM, PsbT, PsbX, PsbY, PsbZ, Psb30/Ycf12, at least 3 peripheral proteins of the oxygen-evolving complex and a large number of cofactors. It forms dimeric complexes. Requires Binds multiple chlorophylls and provides some of the ligands for the Ca-4Mn-5O cluster of the oxygen-evolving complex. It may also provide a ligand for a Cl- that is required for oxygen evolution. PSII binds additional chlorophylls, carotenoids and specific lipids. as cofactor.

It is found in the plastid. The protein resides in the chloroplast thylakoid membrane. One of the components of the core complex of photosystem II (PSII). It binds chlorophyll and helps catalyze the primary light-induced photochemical processes of PSII. PSII is a light-driven water:plastoquinone oxidoreductase, using light energy to abstract electrons from H(2)O, generating O(2) and a proton gradient subsequently used for ATP formation. This Saccharum hybrid (Sugarcane) protein is Photosystem II CP43 reaction center protein.